Here is a 560-residue protein sequence, read N- to C-terminus: Oxygen-dependent choline dehydrogenase (560 aa).

Residue 6–35 (DYIIVGAGSAGCVLADRLSESGDHSVLLLE) participates in FAD binding. Residue histidine 470 is the Proton acceptor of the active site.

Belongs to the GMC oxidoreductase family. The cofactor is FAD.

It catalyses the reaction choline + A = betaine aldehyde + AH2. It carries out the reaction betaine aldehyde + NAD(+) + H2O = glycine betaine + NADH + 2 H(+). It participates in amine and polyamine biosynthesis; betaine biosynthesis via choline pathway; betaine aldehyde from choline (cytochrome c reductase route): step 1/1. Functionally, involved in the biosynthesis of the osmoprotectant glycine betaine. Catalyzes the oxidation of choline to betaine aldehyde and betaine aldehyde to glycine betaine at the same rate. This Vibrio vulnificus (strain YJ016) protein is Oxygen-dependent choline dehydrogenase.